The primary structure comprises 215 residues: MVKSTTVTRLDGLPLAASVDDESTERNLESHKKQAKLILKRLSPTSEKRASIESGDYTFHYLIDNGICYLCICEQSYPRKLAFSYLEELAGEFWNSFGEEALQPGLRPYAFVQFDTFMQKSKRVYNTPRANDNLDKLNTELKDVTRVMTKNIEDLLYRGDSLEKMADLSSDLRYSSAKYKKAARRVNLEALWRQYGPVSIIALLFLIFVYWRFFA.

At Met1 to Gln194 the chain is on the cytoplasmic side. The region spanning Arg9–Met118 is the Longin domain. A v-SNARE coiled-coil homology domain is found at Asn133–Arg193. The helical; Anchor for type IV membrane protein transmembrane segment at Tyr195–Ala215 threads the bilayer.

It belongs to the synaptobrevin family. In terms of assembly, component of two distinct SNARE complexes consisting of sed5, bos1, bet1 and sec22 or ufe1, use1, sec20 and sec22. Ykt6 can probably replace sec22 as subunit of either complex.

The protein localises to the membrane. Its subcellular location is the endoplasmic reticulum membrane. The protein resides in the golgi apparatus membrane. Its function is as follows. Nonessential SNARE involved in targeting and fusion of ER-derived transport vesicles with the Golgi complex as well as Golgi-derived retrograde transport vesicles with the ER. The protein is Protein transport protein sec22 (sec22) of Schizosaccharomyces pombe (strain 972 / ATCC 24843) (Fission yeast).